The primary structure comprises 495 residues: UDP-N-acetylmuramoyl-L-alanyl-D-glutamate--2,6-diaminopimelate ligase (495 aa).

S29 serves as a coordination point for UDP-N-acetyl-alpha-D-muramoyl-L-alanyl-D-glutamate. 111-117 (GTNGKTS) lines the ATP pocket. UDP-N-acetyl-alpha-D-muramoyl-L-alanyl-D-glutamate-binding positions include 153-154 (TT), S180, Q186, and R188. An N6-carboxylysine modification is found at K220. Residues R384, 408–411 (DNPR), G459, and E463 contribute to the meso-2,6-diaminopimelate site. The Meso-diaminopimelate recognition motif motif lies at 408–411 (DNPR).

It belongs to the MurCDEF family. MurE subfamily. Requires Mg(2+) as cofactor. In terms of processing, carboxylation is probably crucial for Mg(2+) binding and, consequently, for the gamma-phosphate positioning of ATP.

The protein localises to the cytoplasm. The enzyme catalyses UDP-N-acetyl-alpha-D-muramoyl-L-alanyl-D-glutamate + meso-2,6-diaminopimelate + ATP = UDP-N-acetyl-alpha-D-muramoyl-L-alanyl-gamma-D-glutamyl-meso-2,6-diaminopimelate + ADP + phosphate + H(+). Its pathway is cell wall biogenesis; peptidoglycan biosynthesis. Its function is as follows. Catalyzes the addition of meso-diaminopimelic acid to the nucleotide precursor UDP-N-acetylmuramoyl-L-alanyl-D-glutamate (UMAG) in the biosynthesis of bacterial cell-wall peptidoglycan. The chain is UDP-N-acetylmuramoyl-L-alanyl-D-glutamate--2,6-diaminopimelate ligase from Xanthomonas campestris pv. campestris (strain 8004).